Here is a 63-residue protein sequence, read N- to C-terminus: Large ribosomal subunit protein bL28 (63 aa).

Belongs to the bacterial ribosomal protein bL28 family.

The polypeptide is Large ribosomal subunit protein bL28 (Sulfurihydrogenibium sp. (strain YO3AOP1)).